Here is a 200-residue protein sequence, read N- to C-terminus: Small ribosomal subunit protein uS4c (200 aa).

In terms of domain architecture, S4 RNA-binding spans Ile88–Cys148.

The protein belongs to the universal ribosomal protein uS4 family. In terms of assembly, part of the 30S ribosomal subunit.

Its subcellular location is the plastid. It localises to the apicoplast. In terms of biological role, one of the primary rRNA binding proteins, it binds directly to 16S rRNA where it nucleates assembly of the body of the 30S subunit. The polypeptide is Small ribosomal subunit protein uS4c (rps4) (Eimeria tenella (Coccidian parasite)).